The chain runs to 236 residues: tRNA1(Val) (adenine(37)-N6)-methyltransferase (236 aa).

Belongs to the methyltransferase superfamily. tRNA (adenine-N(6)-)-methyltransferase family.

Its subcellular location is the cytoplasm. The catalysed reaction is adenosine(37) in tRNA1(Val) + S-adenosyl-L-methionine = N(6)-methyladenosine(37) in tRNA1(Val) + S-adenosyl-L-homocysteine + H(+). Functionally, specifically methylates the adenine in position 37 of tRNA(1)(Val) (anticodon cmo5UAC). The protein is tRNA1(Val) (adenine(37)-N6)-methyltransferase of Actinobacillus pleuropneumoniae serotype 5b (strain L20).